The following is a 120-amino-acid chain: Large ribosomal subunit protein bL17 (120 aa).

It belongs to the bacterial ribosomal protein bL17 family. In terms of assembly, part of the 50S ribosomal subunit. Contacts protein L32.

This chain is Large ribosomal subunit protein bL17, found in Mycoplasmopsis pulmonis (strain UAB CTIP) (Mycoplasma pulmonis).